A 90-amino-acid polypeptide reads, in one-letter code: Phosphocarrier protein NPr (90 aa).

Positions 2–90 (TVKQTVEITN…ALFNSGFDED (89 aa)) constitute an HPr domain. His16 functions as the Pros-phosphohistidine intermediate in the catalytic mechanism.

This sequence belongs to the HPr family.

It localises to the cytoplasm. In terms of biological role, component of the phosphoenolpyruvate-dependent nitrogen-metabolic phosphotransferase system (nitrogen-metabolic PTS), that seems to be involved in regulating nitrogen metabolism. The phosphoryl group from phosphoenolpyruvate (PEP) is transferred to the phosphoryl carrier protein NPr by enzyme I-Ntr. Phospho-NPr then transfers it to EIIA-Ntr. Could function in the transcriptional regulation of sigma-54 dependent operons in conjunction with the NPr (PtsO) and EIIA-Ntr (PtsN) proteins. The chain is Phosphocarrier protein NPr (ptsO) from Escherichia coli O157:H7.